The chain runs to 888 residues: Leukocyte tyrosine kinase receptor (888 aa).

The signal sequence occupies residues 1-16; it reads MGCSHRLLLWLGAAGT. At 17–421 the chain is on the extracellular side; it reads ILCSNSEFQT…CMDLPTTASP (405 aa). Disulfide bonds link Cys73–Cys86 and Cys168–Cys179. The disordered stretch occupies residues 226–294; sequence LVAAGGGGRS…RSPREGAEGG (69 aa). The segment covering 260-273 has biased composition (gly residues); sequence GSGGRGGAAGGGSG. A disulfide bond links Cys297 and Cys319. 2 N-linked (GlcNAc...) asparagine glycosylation sites follow: Asn377 and Asn409. Residues 422 to 446 form a helical membrane-spanning segment; that stretch reads LILMGAVVAALALSLLMMCAVLILV. At 447–888 the chain is on the cytoplasmic side; the sequence is NQKCQGLWGT…SSSSSIPGIQ (442 aa). Positions 506–782 constitute a Protein kinase domain; that stretch reads VTLLRALGHG…IQYCTQDPDV (277 aa). Residues 512-520 and Lys540 contribute to the ATP site; that span reads LGHGAFGEV. Asp639 functions as the Proton acceptor in the catalytic mechanism. The residue at position 672 (Tyr672) is a Phosphotyrosine; by autocatalysis. Residues 857 to 888 are disordered; sequence TYGSWTPRGPQGEDTGIEHCNGSSSSSIPGIQ. Residues 877-888 show a composition bias toward polar residues; sequence NGSSSSSIPGIQ.

The protein belongs to the protein kinase superfamily. Tyr protein kinase family. Insulin receptor subfamily. In terms of assembly, homodimer; homodimerizes following ligand-binding. Part of a complex including LTK, TNK2 and GRB2, in which GRB2 promotes LTK recruitment by TNK2. Phosphorylated at tyrosine residues by autocatalysis, which activates kinase activity. In terms of tissue distribution, subsets of lymphoid and neuronal cells.

The protein resides in the cell membrane. It localises to the endoplasmic reticulum. It carries out the reaction L-tyrosyl-[protein] + ATP = O-phospho-L-tyrosyl-[protein] + ADP + H(+). With respect to regulation, activated by ligand-binding, leading to homodimerization and autophosphorylation. Its function is as follows. Receptor with a tyrosine-protein kinase activity. Following activation by ALKAL1 or ALKAL2 ligands at the cell surface, transduces an extracellular signal into an intracellular response. Ligand-binding to the extracellular domain induces tyrosine kinase activation, leading to activation of the mitogen-activated protein kinase (MAPK) pathway. Phosphorylates almost exclusively at the first tyrosine of the Y-x-x-x-Y-Y motif. The exact function of this protein is not known; studies with chimeric proteins demonstrate its ability to promote growth and specifically neurite outgrowth, and cell survival. Involved in regulation of the secretory pathway involving endoplasmic reticulum (ER) export sites (ERESs) and ER to Golgi transport. In Mus musculus (Mouse), this protein is Leukocyte tyrosine kinase receptor.